Reading from the N-terminus, the 522-residue chain is MLDNKFGFKQRVASLRWLSAAIMLSVSAVPAWAFSIDDVAQQAEKLSQKGFEAPKSNLPAQFRDMKFADYQQIRFNNDKSYWNNVQTPFKLQFYHQGMYFDTPVKINEVTATTVDEIKYSPEYFDFGSVNHDAEAVKNLGFAGFKVLYPINKADKNDEIVSMLGASYFRVVGKGQIYGLSARGLAIDTALPSGEEFPRFREFWIERPKPNDKHLVIYALLDSPRAAGAYRFTVYPGRDSVVDVQAKVFLRDKVGKLGIAPLTSMYLFGPNQPSPTLNYRPALNDSNGLSIHAGNGEWIWRPLNNPKHLSVSTYAVENPKGFGLLQRGRDFTAYEDLDDRYDLRPSGWVEPKGEWGKGKVELVEIPTADETNDNIVAFWTPDVLPETGKPLDIKYRLHFTRDEDQLHSPNIAYVQQTRRSAGDVKQSNLIRQPDGTIAYIVDFVGPNLKELDESTPVASQVSIGDNGEIVENNVRYNPVTHGWRLTLRLRVKDAKQPTEMRAALVNGETTLTETWSNQLPANE.

Positions 1-33 (MLDNKFGFKQRVASLRWLSAAIMLSVSAVPAWA) are cleaved as a signal peptide.

The protein belongs to the OpgD/OpgG family.

It localises to the periplasm. The protein operates within glycan metabolism; osmoregulated periplasmic glucan (OPG) biosynthesis. Involved in the biosynthesis of osmoregulated periplasmic glucans (OPGs). This chain is Glucans biosynthesis protein G, found in Pectobacterium carotovorum subsp. carotovorum (strain PC1).